A 76-amino-acid polypeptide reads, in one-letter code: Centromere protein W (76 aa).

The protein belongs to the CENP-W/WIP1 family. As to quaternary structure, heterodimer with CENPT; this dimer coassembles with CENPS-CENPX heterodimers at centromeres to form the tetrameric CENP-T-W-S-X complex, which is a subcomplex of the large constitutive centromere-associated network (CCAN, also known as the interphase centromere complex or ICEN). Interacts with NPM1.

Its subcellular location is the nucleus. The protein resides in the chromosome. It localises to the centromere. It is found in the kinetochore. Component of the CENPA-NAC (nucleosome-associated) complex, a complex that plays a central role in assembly of kinetochore proteins, mitotic progression and chromosome segregation. The CENPA-NAC complex recruits the CENPA-CAD (nucleosome distal) complex and may be involved in incorporation of newly synthesized CENPA into centromeres. Part of a nucleosome-associated complex that binds specifically to histone H3-containing nucleosomes at the centromere, as opposed to nucleosomes containing CENPA. Component of the heterotetrameric CENP-T-W-S-X complex that binds and supercoils DNA, and plays an important role in kinetochore assembly. CENPW has a fundamental role in kinetochore assembly and function. It is one of the inner kinetochore proteins, with most further proteins binding downstream. Required for normal chromosome organization and normal progress through mitosis. This Gallus gallus (Chicken) protein is Centromere protein W (CENPW).